The chain runs to 300 residues: NAD kinase (300 aa).

Residue Asp-75 is the Proton acceptor of the active site. NAD(+)-binding positions include 75 to 76, 149 to 150, Arg-177, Asp-179, 190 to 195, Ala-214, and Gln-248; these read DG, ND, and TAYALS.

Belongs to the NAD kinase family. It depends on a divalent metal cation as a cofactor.

The protein localises to the cytoplasm. The catalysed reaction is NAD(+) + ATP = ADP + NADP(+) + H(+). Involved in the regulation of the intracellular balance of NAD and NADP, and is a key enzyme in the biosynthesis of NADP. Catalyzes specifically the phosphorylation on 2'-hydroxyl of the adenosine moiety of NAD to yield NADP. This Burkholderia orbicola (strain MC0-3) protein is NAD kinase.